A 141-amino-acid polypeptide reads, in one-letter code: Hemoglobin subunit alpha (141 aa).

The region spanning 1 to 141 (VLSPADKTNV…VSTVLTSKYR (141 aa)) is the Globin domain. Serine 3 bears the Phosphoserine mark. Lysine 7 bears the N6-succinyllysine mark. A Phosphothreonine modification is found at threonine 8. An N6-succinyllysine modification is found at lysine 11. N6-acetyllysine; alternate is present on lysine 16. Position 16 is an N6-succinyllysine; alternate (lysine 16). Phosphotyrosine is present on tyrosine 24. Phosphoserine is present on serine 35. The residue at position 40 (lysine 40) is an N6-succinyllysine. Serine 49 bears the Phosphoserine mark. Position 58 (histidine 58) interacts with O2. Histidine 87 is a binding site for heme b. A Phosphoserine modification is found at serine 102. Phosphothreonine is present on threonine 108. A phosphoserine mark is found at serine 124 and serine 131. Threonine 134 and threonine 137 each carry phosphothreonine. The residue at position 138 (serine 138) is a Phosphoserine.

This sequence belongs to the globin family. In terms of assembly, heterotetramer of two alpha chains and two beta chains. As to expression, red blood cells.

Its function is as follows. Involved in oxygen transport from the lung to the various peripheral tissues. Hemopressin acts as an antagonist peptide of the cannabinoid receptor CNR1. Hemopressin-binding efficiently blocks cannabinoid receptor CNR1 and subsequent signaling. The protein is Hemoglobin subunit alpha (HBA) of Gorilla gorilla gorilla (Western lowland gorilla).